Reading from the N-terminus, the 114-residue chain is RNA polymerase-binding protein RbpA (114 aa).

Belongs to the RNA polymerase-binding protein RbpA family. As to quaternary structure, monomer. Forms a complex with the RNAP catalytic core, specifically with the beta subunit (RpoB); its binding site may overlap with that of Rif. May bind free principal sigma factors.

Binds to RNA polymerase (RNAP), probably stimulating transcriptions from principal, but not alternative sigma factor promoters. Partially restores transcription in the presence of rifampicin (Rif) in vitro; overexpression leads to an increase in the Rif tolerance in vivo, with smaller colonies. Seems to act by removing Rif from its binding site and preventing its further binding. No longer stimulates transcription in Rif-resistant RNA polymerase (with mutations in rpoB). This chain is RNA polymerase-binding protein RbpA, found in Mycolicibacterium smegmatis (strain ATCC 700084 / mc(2)155) (Mycobacterium smegmatis).